The primary structure comprises 321 residues: uncharacterized protein (321 aa).

The next 9 helical transmembrane spans lie at 12–32 (IGVE…WAAT), 52–72 (LITS…AFLV), 86–106 (ILMS…ILII), 109–129 (LTGL…QQWF), 136–156 (FVIS…LVLA), 168–188 (DSLS…LFVG), 214–234 (WGMI…FTFL), 254–274 (KEIP…GLFF), and 292–312 (IFIC…QIFA).

The protein localises to the cell membrane. This is an uncharacterized protein from Campylobacter jejuni subsp. jejuni serotype O:2 (strain ATCC 700819 / NCTC 11168).